The sequence spans 329 residues: GTPase Obg (329 aa).

Residues 1 to 159 form the Obg domain; sequence MQFIDQARIT…WPLQLELKLL (159 aa). Residues 160–328 form the OBG-type G domain; the sequence is AEVGIIGLPN…LLAETWVELG (169 aa). ATP contacts are provided by residues 166 to 173, 191 to 195, 213 to 216, 280 to 283, and 309 to 311; these read GLPNAGKS, FTTLV, DIPG, NKQE, and SAA. Residues Ser-173 and Thr-193 each coordinate Mg(2+).

This sequence belongs to the TRAFAC class OBG-HflX-like GTPase superfamily. OBG GTPase family. Monomer. Mg(2+) serves as cofactor.

It localises to the cytoplasm. An essential GTPase which binds GTP, GDP and possibly (p)ppGpp with moderate affinity, with high nucleotide exchange rates and a fairly low GTP hydrolysis rate. Plays a role in control of the cell cycle, stress response, ribosome biogenesis and in those bacteria that undergo differentiation, in morphogenesis control. In Synechococcus sp. (strain CC9605), this protein is GTPase Obg.